A 292-amino-acid chain; its full sequence is NAD kinase (292 aa).

Catalysis depends on D73, which acts as the Proton acceptor. Residues 73–74 (DG), 147–148 (NE), H158, R175, D177, 188–193 (TAYSLS), and Q247 contribute to the NAD(+) site.

This sequence belongs to the NAD kinase family. Requires a divalent metal cation as cofactor.

It is found in the cytoplasm. It carries out the reaction NAD(+) + ATP = ADP + NADP(+) + H(+). Functionally, involved in the regulation of the intracellular balance of NAD and NADP, and is a key enzyme in the biosynthesis of NADP. Catalyzes specifically the phosphorylation on 2'-hydroxyl of the adenosine moiety of NAD to yield NADP. This chain is NAD kinase, found in Photorhabdus laumondii subsp. laumondii (strain DSM 15139 / CIP 105565 / TT01) (Photorhabdus luminescens subsp. laumondii).